Reading from the N-terminus, the 302-residue chain is Arginase (302 aa).

Positions 103, 126, 128, and 130 each coordinate Mn(2+). Substrate is bound by residues 128–132 (HGDLN), 139–141 (SGN), and Asp180. Mn(2+) is bound by residues Asp229 and Asp231. Residues Thr243 and Glu274 each coordinate substrate.

It belongs to the arginase family. The cofactor is Mn(2+).

It carries out the reaction L-arginine + H2O = urea + L-ornithine. It functions in the pathway nitrogen metabolism; urea cycle; L-ornithine and urea from L-arginine: step 1/1. This chain is Arginase (arg), found in Staphylococcus aureus (strain MRSA252).